Reading from the N-terminus, the 216-residue chain is Cytidylate kinase (216 aa).

Residue 7-15 (GPSGTGKST) coordinates ATP.

The protein belongs to the cytidylate kinase family. Type 1 subfamily.

It localises to the cytoplasm. It catalyses the reaction CMP + ATP = CDP + ADP. The catalysed reaction is dCMP + ATP = dCDP + ADP. This Chlamydia trachomatis serovar A (strain ATCC VR-571B / DSM 19440 / HAR-13) protein is Cytidylate kinase.